We begin with the raw amino-acid sequence, 1047 residues long: Probable sucrose-phosphate synthase 2 (1047 aa).

A compositionally biased stretch (basic and acidic residues) spans 101-123 (EGKNAKREAKREREREKARREVT). Residues 101–153 (EGKNAKREAKREREREKARREVTAEMSEDFSEGEKADLPGEIPTPSDNNTKGR) are disordered. Residues S127, S131, and S159 each carry the phosphoserine modification. The tract at residues 712 to 731 (KSGSNNGVDTNLDAEDRAAE) is disordered.

Belongs to the glycosyltransferase 1 family. As to quaternary structure, homodimer or homotetramer. As to expression, expressed in roots, cauline leaves, flower buds, flowers and anthers. Highly expressed in maturing nectaries.

It carries out the reaction beta-D-fructose 6-phosphate + UDP-alpha-D-glucose = sucrose 6(F)-phosphate + UDP + H(+). Its pathway is glycan biosynthesis; sucrose biosynthesis; sucrose from D-fructose 6-phosphate and UDP-alpha-D-glucose: step 1/2. Its activity is regulated as follows. Activity is regulated by phosphorylation and moderated by concentration of metabolites and light. Its function is as follows. Plays a role in photosynthetic sucrose synthesis by catalyzing the rate-limiting step of sucrose biosynthesis from UDP-glucose and fructose- 6-phosphate. Involved in the regulation of carbon partitioning in the leaves of plants. May regulate the synthesis of sucrose and therefore play a major role as a limiting factor in the export of photoassimilates out of the leaf. Plays a role for sucrose availability that is essential for plant growth and fiber elongation. Required for nectar secretion. The sequence is that of Probable sucrose-phosphate synthase 2 (SPS2) from Arabidopsis thaliana (Mouse-ear cress).